The primary structure comprises 1873 residues: Voltage-dependent L-type calcium channel subunit alpha-1S (1873 aa).

The segment at 1–23 is disordered; the sequence is MEPSSPQDEGLRKKQPKKPVPEI. At 1–51 the chain is on the cytoplasmic side; the sequence is MEPSSPQDEGLRKKQPKKPVPEILPRPPRALFCLTLENPLRKACISIVEWK. The I repeat unit spans residues 38-337; it reads NPLRKACISI…LVLGVLSGEF (300 aa). The helical transmembrane segment at 52 to 70 threads the bilayer; the sequence is PFETIILLTIFANCVALAV. At 71–85 the chain is on the extracellular side; the sequence is YLPMPEDDNNSLNLG. N-linked (GlcNAc...) asparagine glycosylation is present at Asn79. Residues 86–106 traverse the membrane as a helical segment; the sequence is LEKLEYFFLIVFSIEAAMKII. Over 107–115 the chain is Cytoplasmic; that stretch reads AYGFLFHQD. A helical transmembrane segment spans residues 116–136; that stretch reads AYLRSGWNVLDFTIVFLGVFT. Topologically, residues 137–160 are extracellular; sequence VILEQVNVIQSHTAPMSSKGAGLD. A helical transmembrane segment spans residues 161–179; that stretch reads VKALRAFRVLRPLRLVSGV. Over 180–196 the chain is Cytoplasmic; the sequence is PSLQVVLNSIFKAMLPL. Residues 197–218 traverse the membrane as a helical segment; sequence FHIALLVLFMVIIYAIIGLELF. Residues 219-279 lie on the Extracellular side of the membrane; the sequence is KGKMHKTCYF…HGITHFDNFG (61 aa). Disulfide bonds link Cys226/Cys254 and Cys245/Cys261. A glycan (N-linked (GlcNAc...) asparagine) is linked at Asn257. Residues 280-301 constitute an intramembrane region (pore-forming); that stretch reads FSMLTVYQCITMEGWTDVLYWV. The Selectivity filter of repeat I signature appears at 290–293; sequence TMEG. Glu292 contacts Ca(2+). The Extracellular portion of the chain corresponds to 302–309; that stretch reads NDAIGNEW. The helical transmembrane segment at 310 to 330 threads the bilayer; the sequence is PWIYFVTLILLGSFFILNLVL. At 331–432 the chain is on the cytoplasmic side; that stretch reads GVLSGEFTKE…WKCHDIVKSK (102 aa). Residues 357 to 374 are binding to the beta subunit; that stretch reads QQLDEDLRGYMSWITQGE. 2 positions are modified to phosphoserine: Ser393 and Ser397. An II repeat occupies 418 to 664; it reads NRIFRWKCHD…VFLAIAVDNL (247 aa). The chain crosses the membrane as a helical span at residues 433-451; the sequence is VFYWLVILIVALNTLSIAS. At 452-462 the chain is on the extracellular side; it reads EHHNQPLWLTR. The chain crosses the membrane as a helical span at residues 463–483; sequence LQDIANRVLLSLFTTEMLMKM. The Cytoplasmic segment spans residues 484–494; that stretch reads YGLGLRQYFMS. The chain crosses the membrane as a helical span at residues 495–514; that stretch reads IFNRFDCFVVCSGILEILLV. Residues 515 to 523 lie on the Extracellular side of the membrane; the sequence is ESGAMTPLG. Residues 524–542 traverse the membrane as a helical segment; the sequence is ISVLRCIRLLRIFKITKYW. The Cytoplasmic portion of the chain corresponds to 543 to 561; it reads TSLSNLVASLLNSIRSIAS. A helical membrane pass occupies residues 562-581; sequence LLLLLFLFIVIFALLGMQLF. The Extracellular portion of the chain corresponds to 582 to 601; the sequence is GGRYDFEDTEVRRSNFDNFP. The pore-forming intramembrane region spans 602–623; that stretch reads QALISVFQVLTGEDWTSMMYNG. Positions 612–615 match the Selectivity filter of repeat II motif; that stretch reads TGED. Residue Glu614 participates in Ca(2+) binding. The Extracellular portion of the chain corresponds to 624 to 633; sequence IMAYGGPSYP. Residues 634 to 653 traverse the membrane as a helical segment; it reads GMLVCIYFIILFVCGNYILL. Topologically, residues 654 to 799 are cytoplasmic; the sequence is NVFLAIAVDN…VLCHRIVNAT (146 aa). Disordered regions lie at residues 675-717 and 731-757; these read KAKA…IPTT and EVKD…LSPR. Ser687 carries the phosphoserine; by PKA modification. Positions 690 to 711 are enriched in basic and acidic residues; it reads LPDKSEEEKSTMAKKLEQKPKG. Residues 742-751 show a composition bias toward acidic residues; sequence PGDDEEDEPE. Positions 747 to 760 are interaction with STAC, STAC2 and STAC3 (via SH3 domains); sequence EDEPEIPLSPRPRP. The III repeat unit spans residues 786-1068; sequence NKIRVLCHRI…IFVGFVIVTF (283 aa). Residues 800–818 form a helical membrane-spanning segment; the sequence is WFTNFILLFILLSSAALAA. The Extracellular portion of the chain corresponds to 819 to 830; that stretch reads EDPIRADSMRNQ. The helical transmembrane segment at 831-850 threads the bilayer; sequence ILKHFDIGFTSVFTVEIVLK. At 851-866 the chain is on the cytoplasmic side; sequence MTTYGAFLHKGSFCRN. A helical membrane pass occupies residues 867 to 885; that stretch reads YFNMLDLLVVAVSLISMGL. The Extracellular portion of the chain corresponds to 886–892; it reads ESSAISV. A helical transmembrane segment spans residues 893 to 911; sequence VKILRVLRVLRPLRAINRA. Residues 912–930 lie on the Cytoplasmic side of the membrane; it reads KGLKHVVQCMFVAISTIGN. A helical transmembrane segment spans residues 931–950; the sequence is IVLVTTLLQFMFACIGVQLF. Topologically, residues 951 to 1000 are extracellular; that stretch reads KGKFFRCTDLSKMTEEECRGYYYVYKDGDPMQIELRHREWVHSDFHFDNV. The cysteines at positions 957 and 968 are disulfide-linked. The tract at residues 988–1077 is dihydropyridine binding; the sequence is REWVHSDFHF…FQEQGETEYK (90 aa). The segment at residues 1001–1021 is an intramembrane region (pore-forming); the sequence is LSAMMSLFTVSTFEGWPQLLY. The short motif at 1012 to 1015 is the Selectivity filter of repeat III element; sequence TFEG. Residue Glu1014 participates in Ca(2+) binding. Residues 1022–1038 are Extracellular-facing; the sequence is KAIDSNAEDVGPIYNNR. A helical transmembrane segment spans residues 1039–1060; the sequence is VEMAIFFIIYIILIAFFMMNIF. At 1061–1118 the chain is on the cytoplasmic side; sequence VGFVIVTFQEQGETEYKNCELDKNQRQCVQYALKARPLRCYIPKNPYQYQVWYIVTSS. The IV repeat unit spans residues 1105–1384; the sequence is NPYQYQVWYI…LFVAVIMDNF (280 aa). Residues 1119–1140 traverse the membrane as a helical segment; the sequence is YFEYLMFALIMLNTICLGMQHY. An N-linked (GlcNAc...) asparagine glycan is attached at Asn1141. The Extracellular portion of the chain corresponds to 1141–1148; it reads NQSEQMNH. Residues 1149 to 1170 form a helical membrane-spanning segment; the sequence is ISDILNVAFTIIFTLEMILKLM. Residues 1171 to 1180 are Cytoplasmic-facing; sequence AFKARGYFGD. Residues 1181–1200 traverse the membrane as a helical segment; it reads PWNVFDFLIVIGSIIDVILS. The Extracellular portion of the chain corresponds to 1201–1231; sequence EIDTFLASSGGLYCLGGGCGNVDPDESARIS. Residues 1232–1250 form a helical membrane-spanning segment; it reads SAFFRLFRVMRLIKLLSRA. Residues 1251–1268 are Cytoplasmic-facing; it reads EGVRTLLWTFIKSFQALP. Residues 1269-1289 traverse the membrane as a helical segment; that stretch reads YVALLIVMLFFIYAVIGMQMF. Topologically, residues 1290–1311 are extracellular; that stretch reads GKIALVDGTQINRNNNFQTFPQ. The pore-forming intramembrane region spans 1312-1330; that stretch reads AVLLLFRCATGEAWQEILL. The Selectivity filter of repeat IV signature appears at 1321–1324; sequence TGEA. Residues 1331–1356 lie on the Extracellular side of the membrane; sequence ACSYGKLCDPESDYAPGEEYTCGTNF. The tract at residues 1337 to 1403 is dihydropyridine binding; it reads LCDPESDYAP…LGPHHLDEFK (67 aa). Cysteines 1338 and 1352 form a disulfide. Residues 1349 to 1391 form a phenylalkylamine binding region; it reads EYTCGTNFAYYYFISFYMLCAFLVINLFVAVIMDNFDYLTRDW. A helical transmembrane segment spans residues 1357–1381; that stretch reads AYYYFISFYMLCAFLVINLFVAVIM. Over 1382-1873 the chain is Cytoplasmic; sequence DNFDYLTRDW…SQETLIPPRL (492 aa). The tract at residues 1522–1542 is interaction with calmodulin; sequence KFYATFLIQEHFRKFMKRQEE. Residue Ser1575 is modified to Phosphoserine; by PKA and CAMK2. Ser1617 carries the post-translational modification Phosphoserine; by PKA. Residues 1731 to 1780 form a disordered region; the sequence is MPRGQAPPAPCQCPRVESSMPEDRKSSTPGSLHEETPHSRSTRENTSRCS. A compositionally biased stretch (basic and acidic residues) spans 1751 to 1776; sequence PEDRKSSTPGSLHEETPHSRSTRENT.

This sequence belongs to the calcium channel alpha-1 subunit (TC 1.A.1.11) family. CACNA1S subfamily. As to quaternary structure, component of a calcium channel complex consisting of a pore-forming alpha subunit (CACNA1S) and the ancillary subunits CACNB1 or CACNB2, CACNG1 and CACNA2D1. The channel complex contains alpha, beta, gamma and delta subunits in a 1:1:1:1 ratio, i.e. it contains either CACNB1 or CACNB2. CACNA1S channel activity is modulated by the auxiliary subunits (CACNB1 or CACNB2, CACNG1 and CACNA2D1). Interacts with DYSF and JSRP1. Interacts with RYR1. Interacts with STAC, STAC2 and STAC3 (via their SH3 domains). Interacts with CALM. The alpha-1S subunit is found in two isoforms in the skeletal muscle: a minor form of 212 kDa containing the complete amino acid sequence, and a major form of 190 kDa derived from the full-length form by post-translational proteolysis close to Phe-1690. Post-translationally, phosphorylated. Phosphorylation by PKA activates the calcium channel. Both the minor and major forms are phosphorylated in vitro by PKA. Phosphorylation at Ser-1575 is involved in beta-adrenergic-mediated regulation of the channel. Skeletal muscle specific.

It is found in the cell membrane. It localises to the sarcolemma. The protein localises to the T-tubule. It catalyses the reaction Ca(2+)(in) = Ca(2+)(out). Its activity is regulated as follows. Channel activity is blocked by dihydropyridines (DHP), phenylalkylamines, and by benzothiazepines. Its function is as follows. Pore-forming, alpha-1S subunit of the voltage-gated calcium channel that gives rise to L-type calcium currents in skeletal muscle. Calcium channels containing the alpha-1S subunit play an important role in excitation-contraction coupling in skeletal muscle via their interaction with RYR1, which triggers Ca(2+) release from the sarcoplasmic reticulum and ultimately results in muscle contraction. Long-lasting (L-type) calcium channels belong to the 'high-voltage activated' (HVA) group. This Homo sapiens (Human) protein is Voltage-dependent L-type calcium channel subunit alpha-1S (CACNA1S).